Reading from the N-terminus, the 102-residue chain is uncharacterized protein (102 aa).

The HTH cro/C1-type domain maps to 48–102; sequence LNDKRKSLGIELSMLELQTGVSISTLNRLFQDPSQVRFTTVFLVAQTLGVSLCAI. Residues 59–78 constitute a DNA-binding region (H-T-H motif); it reads LSMLELQTGVSISTLNRLFQ.

This is an uncharacterized protein from Haemophilus influenzae (strain ATCC 51907 / DSM 11121 / KW20 / Rd).